The following is a 234-amino-acid chain: Putative methyltransferase-like protein 15P1 (234 aa).

Residues 100 to 102 (GGH), Asp119, Phe146, Asp169, and Gln176 each bind S-adenosyl-L-methionine.

The protein belongs to the methyltransferase superfamily. RsmH family.

In terms of biological role, probable S-adenosyl-L-methionine-dependent methyltransferase. This chain is Putative methyltransferase-like protein 15P1 (METTL15P1), found in Homo sapiens (Human).